Reading from the N-terminus, the 113-residue chain is Large ribosomal subunit protein uL22 (113 aa).

The protein belongs to the universal ribosomal protein uL22 family. As to quaternary structure, part of the 50S ribosomal subunit.

Its function is as follows. This protein binds specifically to 23S rRNA; its binding is stimulated by other ribosomal proteins, e.g. L4, L17, and L20. It is important during the early stages of 50S assembly. It makes multiple contacts with different domains of the 23S rRNA in the assembled 50S subunit and ribosome. Functionally, the globular domain of the protein is located near the polypeptide exit tunnel on the outside of the subunit, while an extended beta-hairpin is found that lines the wall of the exit tunnel in the center of the 70S ribosome. The sequence is that of Large ribosomal subunit protein uL22 from Geobacillus thermodenitrificans (strain NG80-2).